Reading from the N-terminus, the 294-residue chain is 33 kDa chaperonin (294 aa).

2 disulfides stabilise this stretch: C235–C237 and C268–C271.

Belongs to the HSP33 family. Under oxidizing conditions two disulfide bonds are formed involving the reactive cysteines. Under reducing conditions zinc is bound to the reactive cysteines and the protein is inactive.

Its subcellular location is the cytoplasm. Its function is as follows. Redox regulated molecular chaperone. Protects both thermally unfolding and oxidatively damaged proteins from irreversible aggregation. Plays an important role in the bacterial defense system toward oxidative stress. This is 33 kDa chaperonin from Proteus mirabilis (strain HI4320).